The chain runs to 1384 residues: Contactin-associated protein 1 (1384 aa).

The signal sequence occupies residues 1–19 (MMHLRLFCILLAAVSGAEG). The Extracellular portion of the chain corresponds to 20-1283 (WGYYGCDEEL…PYYHDEGWVA (1264 aa)). Positions 25 to 168 (CDEELVGPLY…IGLRLGLYGC (144 aa)) constitute an F5/8 type C domain. C25 and C168 are joined by a disulfide. Residues N120, N128, and N276 are each glycosylated (N-linked (GlcNAc...) asparagine). Laminin G-like domains lie at 203–355 (FKTE…AFRC) and 389–538 (FRTW…FDTC). A disulfide bridge connects residues C323 and C355. N-linked (GlcNAc...) asparagine glycosylation is found at N420, N499, and N518. Cystine bridges form between C506–C538, C544–C555, C549–C564, and C566–C576. Positions 540–577 (ITDRCSPNMCEHDGRCYQSWDDFICYCELTGYKGETCH) constitute an EGF-like 1 domain. Residues 576-795 (CHTPLYKESC…NTISFHTGAA (220 aa)) enclose the Fibrinogen C-terminal domain. 9 N-linked (GlcNAc...) asparagine glycosylation sites follow: N597, N653, N664, N763, N804, N843, N860, N948, and N956. Positions 813 to 956 (FRTSAPSGVF…ANASEGTSPN (144 aa)) constitute a Laminin G-like 3 domain. Disulfide bonds link C930-C957, C961-C974, C968-C983, and C985-C995. Positions 957 to 996 (CTGHCAHPRLPCFHGGRCVERYSYYTCDCDLTAFDGPYCN) constitute an EGF-like 2 domain. N1078 and N1147 each carry an N-linked (GlcNAc...) asparagine glycan. In terms of domain architecture, Laminin G-like 4 spans 1088-1250 (FSTSSAPAVL…VQGELSESNC (163 aa)). C1209 and C1250 form a disulfide bridge. Residues 1284–1304 (ILLGFLVAFLLLGLVGMLVLF) traverse the membrane as a helical segment. The Cytoplasmic segment spans residues 1305–1384 (YLQNHRYKGS…PQILEESRSE (80 aa)). The segment covering 1319–1328 (EPKAAHEYHP) has biased composition (basic and acidic residues). A disordered region spans residues 1319-1384 (EPKAAHEYHP…PQILEESRSE (66 aa)). An SH3-binding motif is present at residues 1328 to 1369 (PGSKPPLPTSGPAQVPTPTAAPNQAPASAPAPAPTPAPAPGP). Over residues 1339–1355 (PAQVPTPTAAPNQAPAS) the composition is skewed to low complexity. The span at 1356-1368 (APAPAPTPAPAPG) shows a compositional bias: pro residues. The residue at position 1383 (S1383) is a Phosphoserine.

Belongs to the neurexin family. Interacts with CNTN1/contactin in cis form. In terms of tissue distribution, predominantly expressed in brain. Weak expression detected in ovary, pancreas, colon, lung, heart, intestine and testis.

It localises to the membrane. It is found in the cell junction. The protein resides in the paranodal septate junction. Required, with CNTNAP2, for radial and longitudinal organization of myelinated axons. Plays a role in the formation of functional distinct domains critical for saltatory conduction of nerve impulses in myelinated nerve fibers. Demarcates the paranodal region of the axo-glial junction. In association with contactin involved in the signaling between axons and myelinating glial cells. This Homo sapiens (Human) protein is Contactin-associated protein 1 (CNTNAP1).